The sequence spans 147 residues: Lectin-like protein BA14k (147 aa).

An N-terminal signal peptide occupies residues 1–26 (MNSFRKTCAGALALIFGATSIVPTVA). The helical transmembrane segment at 80 to 100 (GWWYPLAAFGAGAIIGGAISQ) threads the bilayer.

The protein belongs to the BA14k family.

It is found in the cell membrane. Has immunoglobulin-binding and hemagglutination properties, and can bind to mannose. Essential for virulence. May be involved in LPS biosynthesis or polysaccharide transport. The sequence is that of Lectin-like protein BA14k from Brucella abortus (strain S19).